We begin with the raw amino-acid sequence, 134 residues long: Thioredoxin H2-2 (134 aa).

The tract at residues 1–20 (MGSFFSTMFTPPPAADDGGD) is disordered. The Thioredoxin domain maps to 3–130 (SFFSTMFTPP…LERKVNMFIS (128 aa)). Residues cysteine 56 and cysteine 59 each act as nucleophile in the active site. Cysteines 56 and 59 form a disulfide.

The protein belongs to the thioredoxin family. Plant H-type subfamily.

It is found in the cytoplasm. Functionally, probable thiol-disulfide oxidoreductase that may be involved in the redox regulation of a number of cytosolic enzymes. In Oryza sativa subsp. japonica (Rice), this protein is Thioredoxin H2-2.